A 356-amino-acid chain; its full sequence is Histidinol-phosphate aminotransferase (356 aa).

The residue at position 222 (Lys222) is an N6-(pyridoxal phosphate)lysine.

It belongs to the class-II pyridoxal-phosphate-dependent aminotransferase family. Histidinol-phosphate aminotransferase subfamily. In terms of assembly, homodimer. Requires pyridoxal 5'-phosphate as cofactor.

The catalysed reaction is L-histidinol phosphate + 2-oxoglutarate = 3-(imidazol-4-yl)-2-oxopropyl phosphate + L-glutamate. The protein operates within amino-acid biosynthesis; L-histidine biosynthesis; L-histidine from 5-phospho-alpha-D-ribose 1-diphosphate: step 7/9. In Lactiplantibacillus plantarum (strain ATCC BAA-793 / NCIMB 8826 / WCFS1) (Lactobacillus plantarum), this protein is Histidinol-phosphate aminotransferase.